The following is a 263-amino-acid chain: Type III pantothenate kinase (263 aa).

9-16 (DIGNTSIK) serves as a coordination point for ATP. Residues Tyr-103 and 110 to 113 (GADR) contribute to the substrate site. The Proton acceptor role is filled by Asp-112. A K(+)-binding site is contributed by Asp-134. Thr-137 contributes to the ATP binding site. Thr-190 is a binding site for substrate.

This sequence belongs to the type III pantothenate kinase family. As to quaternary structure, homodimer. Requires NH4(+) as cofactor. The cofactor is K(+).

It is found in the cytoplasm. It carries out the reaction (R)-pantothenate + ATP = (R)-4'-phosphopantothenate + ADP + H(+). The protein operates within cofactor biosynthesis; coenzyme A biosynthesis; CoA from (R)-pantothenate: step 1/5. Functionally, catalyzes the phosphorylation of pantothenate (Pan), the first step in CoA biosynthesis. The chain is Type III pantothenate kinase from Desulfovibrio desulfuricans (strain ATCC 27774 / DSM 6949 / MB).